The primary structure comprises 104 residues: L-rhamnose mutarotase (104 aa).

A substrate-binding site is contributed by tyrosine 18. Catalysis depends on histidine 22, which acts as the Proton donor. Residues tyrosine 41 and 76–77 each bind substrate; that span reads WW.

This sequence belongs to the rhamnose mutarotase family. In terms of assembly, homodimer.

It localises to the cytoplasm. It catalyses the reaction alpha-L-rhamnose = beta-L-rhamnose. It participates in carbohydrate metabolism; L-rhamnose metabolism. Functionally, involved in the anomeric conversion of L-rhamnose. The chain is L-rhamnose mutarotase from Burkholderia cenocepacia (strain HI2424).